Consider the following 959-residue polypeptide: Oxysterol-binding protein-related protein 6 (959 aa).

Positions 1–60 (MSSDEKGISPAHKTSTPTHRSASSSTSSQRESRQSIHVLERTASSSTEPSVSRQLLEPEP) are disordered. An N-acetylserine modification is found at Ser2. Low complexity predominate over residues 14-29 (TSTPTHRSASSSTSSQ). Over residues 30-40 (RESRQSIHVLE) the composition is skewed to basic and acidic residues. Residue Ser35 is modified to Phosphoserine. Polar residues predominate over residues 42-53 (TASSSTEPSVSR). The PH domain maps to 86–181 (PDRHEGFMLK…WVSKLRHHRL (96 aa)). Phosphoserine is present on residues Ser190 and Ser290.

It belongs to the OSBP family. Homodimer. Interacts with OSBPL3. As to expression, expressed in skin, respiratory epithelium, small intestine epithelium, pancreas, striated muscle, brain, spinal ganglia, and nervous plexus of the intestine (at protein level). In the brain, specifically in the cerebellum, it is expressed in Purkinje and granule cells. Expressed in hepatocytes and macrophages.

It is found in the nucleus envelope. Its subcellular location is the cytoplasm. The protein localises to the cytosol. The protein resides in the endoplasmic reticulum membrane. It localises to the cell membrane. It is found in the endosome membrane. In terms of biological role, regulates cellular transport and efflux of cholesterol. Plays a role in phosphatidylinositol-4-phophate (PI4P) turnover at the neuronal membrane. Binds via its PH domain PI4P, phosphatidylinositol-4,5-diphosphate, phosphatidylinositol-3,4,5-triphosphate, and phosphatidic acid. Weakly binds 25-hydroxycholesterol. This is Oxysterol-binding protein-related protein 6 (Osbpl6) from Mus musculus (Mouse).